Here is a 767-residue protein sequence, read N- to C-terminus: Photosystem I P700 chlorophyll a apoprotein A1 (767 aa).

Helical transmembrane passes span 72–95, 158–181, 197–221, 305–323, 364–387, 403–429, 451–473, and 548–566; these read IFSA…FHGA, LMSL…FHYH, LNHH…HVSL, IAHH…GHMY, WHAQ…QHMY, IGLF…IAMI, AIIS…LYVH, and FMVH…LILL. 2 residues coordinate [4Fe-4S] cluster: C590 and C599. 2 consecutive transmembrane segments (helical) span residues 606–627 and 681–703; these read HVFL…HFSW and TSAY…MFLF. H692 is a binding site for chlorophyll a'. The chlorophyll a site is built by M700 and Y708. W709 lines the phylloquinone pocket. A helical membrane pass occupies residues 741–761; the sequence is AVGVAHYLLGGIATTWAFFHA.

This sequence belongs to the PsaA/PsaB family. In terms of assembly, the PsaA/B heterodimer binds the P700 chlorophyll special pair and subsequent electron acceptors. PSI consists of a core antenna complex that captures photons, and an electron transfer chain that converts photonic excitation into a charge separation. The cyanobacterial PSI reaction center is composed of one copy each of PsaA,B,C,D,E,F,I,J,K,L,M and X, and forms trimeric complexes. PSI electron transfer chain: 5 chlorophyll a, 1 chlorophyll a', 2 phylloquinones and 3 4Fe-4S clusters. PSI core antenna: 90 chlorophyll a, 22 carotenoids, 3 phospholipids and 1 galactolipid. P700 is a chlorophyll a/chlorophyll a' dimer, A0 is one or more chlorophyll a, A1 is one or both phylloquinones and FX is a shared 4Fe-4S iron-sulfur center. serves as cofactor.

The protein resides in the cellular thylakoid membrane. The catalysed reaction is reduced [plastocyanin] + hnu + oxidized [2Fe-2S]-[ferredoxin] = oxidized [plastocyanin] + reduced [2Fe-2S]-[ferredoxin]. Functionally, psaA and PsaB bind P700, the primary electron donor of photosystem I (PSI), as well as the electron acceptors A0, A1 and FX. PSI is a plastocyanin/cytochrome c6-ferredoxin oxidoreductase, converting photonic excitation into a charge separation, which transfers an electron from the donor P700 chlorophyll pair to the spectroscopically characterized acceptors A0, A1, FX, FA and FB in turn. Oxidized P700 is reduced on the lumenal side of the thylakoid membrane by plastocyanin or cytochrome c6. The protein is Photosystem I P700 chlorophyll a apoprotein A1 of Synechococcus sp. (strain CC9311).